Reading from the N-terminus, the 372-residue chain is MTKHRVVVGLSGGVDSAVTAHLLKQQGHEVVGIFMKNWEDDDDSEYCSSNVDFVDAAAVADVVGIEIEHVNFASEYKDRVFAEFLREYQAGRTPNPDVLCNAEIKFKAFLDHAMRLGAEKIATGHYARVRQNPDTQLFELLKGLDPAKDQSYFLHRLNQAQLSRSMFPVGELKKTEVRRIAEEIGLPNAKKKDSTGICFIGERPFRDFLNRYISKEPGNILDDRNRKLGKHVGLSFYTLGQRSGLGIGGVKEKGAPRGGGDHDPWFVARKELDTNTLRVVQGHDHPWLLSQSLLADQVSWVAGHAPAEGKAYGSKTRYRQPDSPALISGATPEGFRLDFPEPQWAVTPGQSAVLYDGDVCLGGGIIAAVDPH.

ATP-binding positions include 9–16 (GLSGGVDS) and Met35. The interval 95-97 (NPD) is interaction with target base in tRNA. Cys100 acts as the Nucleophile in catalysis. The cysteines at positions 100 and 198 are disulfide-linked. Gly124 lines the ATP pocket. The tract at residues 148-150 (KDQ) is interaction with tRNA. Cys198 functions as the Cysteine persulfide intermediate in the catalytic mechanism. The interaction with tRNA stretch occupies residues 317-318 (RY).

This sequence belongs to the MnmA/TRMU family.

Its subcellular location is the cytoplasm. The enzyme catalyses S-sulfanyl-L-cysteinyl-[protein] + uridine(34) in tRNA + AH2 + ATP = 2-thiouridine(34) in tRNA + L-cysteinyl-[protein] + A + AMP + diphosphate + H(+). In terms of biological role, catalyzes the 2-thiolation of uridine at the wobble position (U34) of tRNA, leading to the formation of s(2)U34. The sequence is that of tRNA-specific 2-thiouridylase MnmA from Delftia acidovorans (strain DSM 14801 / SPH-1).